Reading from the N-terminus, the 668-residue chain is DNA ligase (668 aa).

NAD(+) is bound by residues 32–36 (DSEYD), 81–82 (SL), and Glu110. The active-site N6-AMP-lysine intermediate is the Lys112. Residues Arg133, Glu167, Lys283, and Lys307 each coordinate NAD(+). Zn(2+) contacts are provided by Cys401, Cys404, Cys419, and Cys424. One can recognise a BRCT domain in the interval 586–668 (QTDSEFNGKT…IQKQKEVENK (83 aa)).

Belongs to the NAD-dependent DNA ligase family. LigA subfamily. Requires Mg(2+) as cofactor. It depends on Mn(2+) as a cofactor.

It carries out the reaction NAD(+) + (deoxyribonucleotide)n-3'-hydroxyl + 5'-phospho-(deoxyribonucleotide)m = (deoxyribonucleotide)n+m + AMP + beta-nicotinamide D-nucleotide.. Its function is as follows. DNA ligase that catalyzes the formation of phosphodiester linkages between 5'-phosphoryl and 3'-hydroxyl groups in double-stranded DNA using NAD as a coenzyme and as the energy source for the reaction. It is essential for DNA replication and repair of damaged DNA. The polypeptide is DNA ligase (Staphylococcus carnosus (strain TM300)).